The primary structure comprises 548 residues: MKKINPTQTSAWKALQQHFKEIEPIHIRHLFHADPKRSEKFSLTFNDLIRVDFSKNRLTAQTIEKLQALAQETDLALAICSMFSGGKINETEERPVLHIALRNRGNQPILVDGQDVMPLVNAVLEKMKRFCHQVIKGDWNGYSGQTITDVVNIGIGGSDLGPYMATEALKPYKNHLKMHFVSNVDGTDIVETLKALNPARTLFIVASKTFTTQETMTNAQTAREWFLKTAGDSAHVARHFVALSTNIKEVTNFGIDPENSFEFWDWVGGRYSLWSAIGLPIALSIGFDNFEKLLEGAYEMDQHFLKTDFTHNIPVILALIGIWYSHFFGAETEAVLPYDQYLHRFPAYLQQASMESNGKWVDRDGKPVGYQTGSILWGEPGTNGQHAFYQLIHQGTKIIPCDFIAPVISHNAIGDHHHKLLANFFAQTQALAFGKTEQEVQEELMAEGVFSEKATYLAPFKAFSGNRPTNSILLKQITPLSLGALIALYEHKIFTQGVILNIFSFDQWGVELGKKLASGILSELEGPEKVSCHDSSTNSLINCFKKWH.

The active-site Proton donor is Glu355. Catalysis depends on residues His386 and Lys514.

This sequence belongs to the GPI family.

The protein resides in the cytoplasm. It carries out the reaction alpha-D-glucose 6-phosphate = beta-D-fructose 6-phosphate. It functions in the pathway carbohydrate biosynthesis; gluconeogenesis. It participates in carbohydrate degradation; glycolysis; D-glyceraldehyde 3-phosphate and glycerone phosphate from D-glucose: step 2/4. Functionally, catalyzes the reversible isomerization of glucose-6-phosphate to fructose-6-phosphate. The sequence is that of Glucose-6-phosphate isomerase from Hamiltonella defensa subsp. Acyrthosiphon pisum (strain 5AT).